A 419-amino-acid chain; its full sequence is UPF0242 protein TC_0906 (419 aa).

Belongs to the UPF0242 family.

The sequence is that of UPF0242 protein TC_0906 from Chlamydia muridarum (strain MoPn / Nigg).